The following is a 766-amino-acid chain: Protein translocase subunit SecA 2 (766 aa).

Residues Q84, 102-106 (GEGKT), and D490 contribute to the ATP site.

This sequence belongs to the SecA family. Monomer and homodimer. Part of the essential Sec protein translocation apparatus which comprises SecA, SecYEG and auxiliary proteins SecDF. Other proteins may also be involved.

It is found in the cell membrane. The protein resides in the cytoplasm. It catalyses the reaction ATP + H2O + cellular proteinSide 1 = ADP + phosphate + cellular proteinSide 2.. In terms of biological role, part of the Sec protein translocase complex. Interacts with the SecYEG preprotein conducting channel. Has a central role in coupling the hydrolysis of ATP to the transfer of proteins into and across the cell membrane, serving as an ATP-driven molecular motor driving the stepwise translocation of polypeptide chains across the membrane. The chain is Protein translocase subunit SecA 2 from Thermobifida fusca (strain YX).